Reading from the N-terminus, the 375-residue chain is Queuine tRNA-ribosyltransferase (375 aa).

Catalysis depends on aspartate 90, which acts as the Proton acceptor. Substrate-binding positions include 90 to 94, aspartate 144, glutamine 193, and glycine 220; that span reads DSGGF. Positions 251 to 257 are RNA binding; that stretch reads GVGTPED. Aspartate 270 serves as the catalytic Nucleophile. Positions 275–279 are RNA binding; important for wobble base 34 recognition; the sequence is TRNAR. Zn(2+) is bound by residues cysteine 308, cysteine 310, cysteine 313, and histidine 339.

The protein belongs to the queuine tRNA-ribosyltransferase family. Homodimer. Within each dimer, one monomer is responsible for RNA recognition and catalysis, while the other monomer binds to the replacement base PreQ1. Zn(2+) serves as cofactor.

It catalyses the reaction 7-aminomethyl-7-carbaguanine + guanosine(34) in tRNA = 7-aminomethyl-7-carbaguanosine(34) in tRNA + guanine. Its pathway is tRNA modification; tRNA-queuosine biosynthesis. Its function is as follows. Catalyzes the base-exchange of a guanine (G) residue with the queuine precursor 7-aminomethyl-7-deazaguanine (PreQ1) at position 34 (anticodon wobble position) in tRNAs with GU(N) anticodons (tRNA-Asp, -Asn, -His and -Tyr). Catalysis occurs through a double-displacement mechanism. The nucleophile active site attacks the C1' of nucleotide 34 to detach the guanine base from the RNA, forming a covalent enzyme-RNA intermediate. The proton acceptor active site deprotonates the incoming PreQ1, allowing a nucleophilic attack on the C1' of the ribose to form the product. After dissociation, two additional enzymatic reactions on the tRNA convert PreQ1 to queuine (Q), resulting in the hypermodified nucleoside queuosine (7-(((4,5-cis-dihydroxy-2-cyclopenten-1-yl)amino)methyl)-7-deazaguanosine). The polypeptide is Queuine tRNA-ribosyltransferase (Herminiimonas arsenicoxydans).